We begin with the raw amino-acid sequence, 571 residues long: Double-stranded RNA-binding protein Staufen homolog 2 (571 aa).

The 68-residue stretch at 8 to 75 (TPMCLVNELA…ANKALTESTL (68 aa)) folds into the DRBM 1 domain. Phosphoserine occurs at positions 9 and 13. Phosphothreonine is present on Arg18. Ser21 bears the Phosphoserine mark. 2 disordered regions span residues 71–94 (TEST…PGSI) and 178–203 (ALQN…DDKD). Residues 83–94 (PKSNVNNNPGSI) are compositionally biased toward polar residues. In terms of domain architecture, DRBM 2 spans 95-181 (TPTVELNGLA…AMKALQALQN (87 aa)). Ser188 carries the post-translational modification Phosphoserine. Residues 194 to 203 (SGKEMDDDKD) are compositionally biased toward basic and acidic residues. 2 DRBM domains span residues 207–274 (SEIS…ELKK) and 307–375 (NPIS…QLGY). Short sequence motifs (nuclear localization signal) lie at residues 273–317 (KKLP…QIQQ) and 373–412 (LGYK…PKGI). A required for dendritic transport region spans residues 381–571 (LQDQLDKTGE…QDCKKSKSVI (191 aa)). A disordered region spans residues 382 to 413 (QDQLDKTGENKGWSGPKPGFPEPANNTPKGIL). 6 positions are modified to phosphoserine: Ser395, Ser416, Ser426, Ser440, Ser456, and Ser493. The disordered stretch occupies residues 546–571 (LREKADNNQANPGSITQDCKKSKSVI). Over residues 552 to 562 (NNQANPGSITQ) the composition is skewed to polar residues.

Identified in a mRNP complex, at least composed of DHX9, DDX3X, ELAVL1, HNRNPU, IGF2BP1, ILF3, PABPC1, PCBP2, PTBP2, STAU1, STAU2, SYNCRIP and YBX1. Interacts with the exportin XPO5. This requires RNA and RAN bound to GTP. Interacts with microtubules. Isoform 2 and isoform 3 may also interact with ribosomes, and this association is independent of translation. Interacts with TRIM71 (via NHL repeats) in an RNA-dependent manner. As to expression, expressed in both somata and dendrites of hippocampal neurons.

The protein localises to the nucleus. The protein resides in the nucleolus. It localises to the cytoplasm. It is found in the endoplasmic reticulum. Its function is as follows. RNA-binding protein required for the microtubule-dependent transport of neuronal RNA from the cell body to the dendrite. As protein synthesis occurs within the dendrite, the localization of specific mRNAs to dendrites may be a prerequisite for neurite outgrowth and plasticity at sites distant from the cell body. The sequence is that of Double-stranded RNA-binding protein Staufen homolog 2 (Stau2) from Rattus norvegicus (Rat).